The primary structure comprises 190 residues: Female-specific histamine-binding protein 1 (190 aa).

A signal peptide spans Met-1 to Ala-18. Positions 54, 57, 60, 100, 118, 153, and 155 each coordinate histamine. Intrachain disulfides connect Cys-66–Cys-187 and Cys-137–Cys-166.

Belongs to the calycin superfamily. Histamine-binding salivary protein family. Monomer. In terms of tissue distribution, expressed in salivary glands.

The protein localises to the secreted. Salivary tick protein that acts by scavenging histamine at the wound site, outcompeting histamine receptors for histamine, thereby overcoming host inflammatory responses. Binds histamine with a high-affinity (Kd=18 nM). Contains two binding histamine sites (H and L), that appear to bind histamine with differing affinities (high and low). In vivo, when tested on a mouse asthma model, shows a profound inhibitory effect on allergic asthma. Aerosol administration of this protein prevents airway hyperreactivity and abrogates peribronchial inflammation, eosinophil recruitment, mucus hypersecretion, and interleukins (IL-4 and IL-5) secretion. In addition, when tested on a mouse model of acute respiratory distress syndrome (ARDS), it attenuates endotoxin-induced acute lung injury. This Rhipicephalus appendiculatus (Brown ear tick) protein is Female-specific histamine-binding protein 1.